The primary structure comprises 109 residues: Aquaporin-2 (109 aa).

The Cytoplasmic segment spans residues serine 1–arginine 6. Residues alanine 7–leucine 27 traverse the membrane as a helical segment. The Extracellular portion of the chain corresponds to asparagine 28–serine 35. The helical transmembrane segment at valine 36–leucine 54 threads the bilayer. Over glycine 55–glycine 59 the chain is Cytoplasmic. Positions alanine 60 to alanine 69 form an intramembrane region, discontinuously helical. An NPA 1 motif is present at residues asparagine 63–alanine 65. Topologically, residues cysteine 70–arginine 80 are cytoplasmic. A helical transmembrane segment spans residues alanine 81–leucine 102. Topologically, residues threonine 103–glycine 109 are extracellular.

Belongs to the MIP/aquaporin (TC 1.A.8) family. In terms of assembly, homotetramer. Serine phosphorylation is necessary and sufficient for expression at the apical membrane. Endocytosis is not phosphorylation-dependent. Post-translationally, N-glycosylated.

Its subcellular location is the apical cell membrane. It localises to the basolateral cell membrane. The protein localises to the cell membrane. The protein resides in the cytoplasmic vesicle membrane. It is found in the golgi apparatus. Its subcellular location is the trans-Golgi network membrane. The enzyme catalyses H2O(in) = H2O(out). The catalysed reaction is glycerol(in) = glycerol(out). In terms of biological role, forms a water-specific channel that provides the plasma membranes of renal collecting duct with high permeability to water, thereby permitting water to move in the direction of an osmotic gradient. Plays an essential role in renal water homeostasis. Could also be permeable to glycerol. The sequence is that of Aquaporin-2 from Procavia capensis habessinica (Abyssinian hyrax).